The primary structure comprises 233 residues: Phosphoribosylformylglycinamidine synthase subunit PurQ (233 aa).

Residues 3–233 form the Glutamine amidotransferase type-1 domain; it reads SAILVFPGIN…GLVEHLAKAA (231 aa). C87 functions as the Nucleophile in the catalytic mechanism. Active-site residues include H204 and E206.

In terms of assembly, part of the FGAM synthase complex composed of 1 PurL, 1 PurQ and 2 PurS subunits.

The protein localises to the cytoplasm. It carries out the reaction N(2)-formyl-N(1)-(5-phospho-beta-D-ribosyl)glycinamide + L-glutamine + ATP + H2O = 2-formamido-N(1)-(5-O-phospho-beta-D-ribosyl)acetamidine + L-glutamate + ADP + phosphate + H(+). It catalyses the reaction L-glutamine + H2O = L-glutamate + NH4(+). It functions in the pathway purine metabolism; IMP biosynthesis via de novo pathway; 5-amino-1-(5-phospho-D-ribosyl)imidazole from N(2)-formyl-N(1)-(5-phospho-D-ribosyl)glycinamide: step 1/2. Functionally, part of the phosphoribosylformylglycinamidine synthase complex involved in the purines biosynthetic pathway. Catalyzes the ATP-dependent conversion of formylglycinamide ribonucleotide (FGAR) and glutamine to yield formylglycinamidine ribonucleotide (FGAM) and glutamate. The FGAM synthase complex is composed of three subunits. PurQ produces an ammonia molecule by converting glutamine to glutamate. PurL transfers the ammonia molecule to FGAR to form FGAM in an ATP-dependent manner. PurS interacts with PurQ and PurL and is thought to assist in the transfer of the ammonia molecule from PurQ to PurL. This is Phosphoribosylformylglycinamidine synthase subunit PurQ from Rhodopseudomonas palustris (strain BisB18).